Here is an 84-residue protein sequence, read N- to C-terminus: Large ribosomal subunit protein eL34 (84 aa).

This sequence belongs to the eukaryotic ribosomal protein eL34 family.

The sequence is that of Large ribosomal subunit protein eL34 from Pyrobaculum islandicum (strain DSM 4184 / JCM 9189 / GEO3).